Reading from the N-terminus, the 162-residue chain is uncharacterized protein (162 aa).

The interval 1–49 (MNSRTASARGWFSSRPPTSESDLEPATDGPASETTTLSPEATTFNDTRI) is disordered. Residues 32–46 (SETTTLSPEATTFND) show a composition bias toward polar residues. Residues 62–82 (MLLSFGIITVIGLAVALVLYI) form a helical membrane-spanning segment.

It localises to the membrane. This is an uncharacterized protein from Homo sapiens (Human).